We begin with the raw amino-acid sequence, 209 residues long: Uracil phosphoribosyltransferase (209 aa).

5-phospho-alpha-D-ribose 1-diphosphate is bound by residues R79, R104, and 131–139 (DPMLATGGS). Uracil contacts are provided by residues I194 and 199 to 201 (GDA). Position 200 (D200) interacts with 5-phospho-alpha-D-ribose 1-diphosphate.

This sequence belongs to the UPRTase family. Mg(2+) is required as a cofactor.

It catalyses the reaction UMP + diphosphate = 5-phospho-alpha-D-ribose 1-diphosphate + uracil. It functions in the pathway pyrimidine metabolism; UMP biosynthesis via salvage pathway; UMP from uracil: step 1/1. Allosterically activated by GTP. Its function is as follows. Catalyzes the conversion of uracil and 5-phospho-alpha-D-ribose 1-diphosphate (PRPP) to UMP and diphosphate. This is Uracil phosphoribosyltransferase from Streptococcus pyogenes serotype M1.